The chain runs to 499 residues: Maturase K (499 aa).

Belongs to the intron maturase 2 family. MatK subfamily.

The protein resides in the plastid. The protein localises to the chloroplast. Functionally, usually encoded in the trnK tRNA gene intron. Probably assists in splicing its own and other chloroplast group II introns. The polypeptide is Maturase K (Chamaecrista fasciculata (Showy partridge pea)).